Here is a 492-residue protein sequence, read N- to C-terminus: Uridine-cytidine kinase D (492 aa).

The tract at residues 36–56 is disordered; that stretch reads PLPKNKKDHDQSIESDSSFTR. Residue 117-124 participates in ATP binding; the sequence is GPVGAGKT. The region spanning 290–460 is the CYTH domain; sequence EPVYVCKAKY…PQTFLYLYFK (171 aa). The segment covering 468–483 has biased composition (low complexity); sequence PNYSKLKPNNTNSKIL. The disordered stretch occupies residues 468-492; the sequence is PNYSKLKPNNTNSKILKNNKDKKNL.

It belongs to the uridine kinase family.

The catalysed reaction is uridine + ATP = UMP + ADP + H(+). The enzyme catalyses cytidine + ATP = CMP + ADP + H(+). Its pathway is pyrimidine metabolism; CTP biosynthesis via salvage pathway; CTP from cytidine: step 1/3. The protein operates within pyrimidine metabolism; UMP biosynthesis via salvage pathway; UMP from uridine: step 1/1. Catalyzes the conversion of uridine into uridine monophosphate and cytidine into cytidine monophosphate in the pyrimidine salvage pathway. The protein is Uridine-cytidine kinase D (udkD) of Dictyostelium discoideum (Social amoeba).